The chain runs to 474 residues: Mitochondrial import inner membrane translocase subunit TIM44-1 (474 aa).

Residues 1 to 54 (MAIRKIIRDLLITKQPLLRQLFHQRVLRANARSEFLPAIGYTSHRRFSVFTEFS) constitute a mitochondrion transit peptide. Residues 68–88 (ERTVKELKERTEEFKGVTEDL) adopt a coiled-coil conformation. The span at 132–143 (VKESFKLGKEEN) shows a compositional bias: basic and acidic residues. Positions 132–165 (VKESFKLGKEENAESASSSGTRASQGEKQQSGST) are disordered. Polar residues predominate over residues 145-165 (ESASSSGTRASQGEKQQSGST).

This sequence belongs to the Tim44 family. In terms of assembly, probable component of the PAM complex at least composed of a mitochondrial HSP70 protein, TIMM44 and TIMM14. The complex interacts with the TIMM23 component of the TIM17:23 complex. Expressed in roots, flowers, young cotyledons and leaves.

The protein resides in the mitochondrion inner membrane. Its function is as follows. Essential component of the PAM complex, a complex required for the translocation of transit peptide-containing proteins from the inner membrane into the mitochondrial matrix in an ATP-dependent manner. Recruits mitochondrial HSP70 to drive protein translocation into the matrix using ATP as an energy source. In Arabidopsis thaliana (Mouse-ear cress), this protein is Mitochondrial import inner membrane translocase subunit TIM44-1 (TIM44-1).